The chain runs to 207 residues: Ras-related protein Rab-5B (207 aa).

Gly-2 carries N-myristoyl glycine lipidation. Residues 41-49 (GDSGVGKSS), 60-66 (SEKHQVT), 90-94 (DTGGQ), 148-151 (NKKD), and 176-178 (SAK) each bind GTP. Positions 63-71 (HQVTIGAAF) match the Effector region motif.

Belongs to the small GTPase superfamily. Rab family. Interacts with CK1. May interact with ARF1. Myristoylation is required for cell membrane and food vacuole membrane localization. Post-translationally, may be palmitoylated on Cys-3. In terms of processing, lacks the C-terminal cysteine motifs subject to isoprenylation present in mammalian RAB5B homolog.

Its subcellular location is the cell membrane. It localises to the vacuole membrane. The protein resides in the vesicle. It catalyses the reaction GTP + H2O = GDP + phosphate + H(+). Its activity is regulated as follows. Alternates between an inactive GDP-bound form and an active GTP-bound form. Activated by guanine nucleotide-exchange factors (GEFs) and inactivated by GTPase-activating proteins (GAPs). In terms of biological role, small GTPase which regulates vesicle trafficking between organelles. May be involved in the trafficking of the N-myristoylated AK2 from the endoplasmic reticulum to the parasitophorous vacuole membrane. The polypeptide is Ras-related protein Rab-5B (Plasmodium falciparum (isolate 3D7)).